The primary structure comprises 501 residues: NAD(P)H-quinone oxidoreductase chain 4, chloroplastic (501 aa).

14 helical membrane passes run 5–25 (FPWLTIIVVLPIFAASSIFFL), 38–58 (TCICLTELLLTTYVFCYHFQL), 88–108 (IGPILLTGFITTLATLAAWPV), 114–131 (LFYLLMLVMYSGQIGLFS), 135–155 (LLLFFIMWELELIPVYLLLSM), 168–188 (FILYTAGGSVFLLIGVLGMGL), 209–229 (ALEIIFYFGFLIAYAVKSPII), 243–263 (HYSTCMLLAGILLKMGAYGLI), 273–293 (AHSLFSPWLVIVGTIQIIYAA), 306–326 (IACSSVSHMGFIIIGIGSITD), 331–351 (GAILQILSHGFIGAALFFLSG), 387–407 (LALPGMSGFVAELVVFLGIIT), 417–437 (ILITFVMAIGMILTPIYLLSM), and 464–484 (FVSICIFLPVIGIGIYPDCVF).

It belongs to the complex I subunit 4 family.

The protein resides in the plastid. Its subcellular location is the chloroplast thylakoid membrane. The catalysed reaction is a plastoquinone + NADH + (n+1) H(+)(in) = a plastoquinol + NAD(+) + n H(+)(out). It catalyses the reaction a plastoquinone + NADPH + (n+1) H(+)(in) = a plastoquinol + NADP(+) + n H(+)(out). This is NAD(P)H-quinone oxidoreductase chain 4, chloroplastic from Dioscorea elephantipes (Elephant's foot yam).